The following is a 138-amino-acid chain: Glutaredoxin-like protein C5orf63 (138 aa).

C41 and C44 form a disulfide bridge. The span at E55 to K64 shows a compositional bias: basic and acidic residues. Positions E55–K88 are disordered.

Belongs to the glutaredoxin family. YDR286C subfamily.

This is Glutaredoxin-like protein C5orf63 (C5orf63) from Homo sapiens (Human).